A 213-amino-acid polypeptide reads, in one-letter code: LexA repressor (213 aa).

A DNA-binding region (H-T-H motif) is located at residues 27–47 (QTEIARAFGFKGIRAAQYHLE). Active-site for autocatalytic cleavage activity residues include serine 133 and lysine 170.

It belongs to the peptidase S24 family. In terms of assembly, homodimer.

It carries out the reaction Hydrolysis of Ala-|-Gly bond in repressor LexA.. Represses a number of genes involved in the response to DNA damage (SOS response), including recA and lexA. Has been shown to bind to the palindromic sequence 5'-CTG-N(8-12)-C-[TC]-G. In the presence of single-stranded DNA, RecA interacts with LexA causing an autocatalytic cleavage which disrupts the DNA-binding part of LexA, leading to derepression of the SOS regulon and eventually DNA repair. This is LexA repressor from Xanthomonas citri (Xanthomonas campestris pv. citri).